The chain runs to 90 residues: U7-theraphotoxin-Hhn1l (90 aa).

The first 19 residues, Met1 to Ser19, serve as a signal peptide directing secretion. Residues Phe20–Glu50 constitute a propeptide that is removed on maturation. 3 disulfide bridges follow: Cys51–Cys65, Cys58–Cys70, and Cys64–Cys81.

It belongs to the neurotoxin 10 (Hwtx-1) family. 13 (Hntx-13) subfamily. As to expression, expressed by the venom gland.

The protein resides in the secreted. Its function is as follows. Ion channel inhibitor. The chain is U7-theraphotoxin-Hhn1l from Cyriopagopus hainanus (Chinese bird spider).